The following is a 301-amino-acid chain: Glycine--tRNA ligase alpha subunit (301 aa).

Belongs to the class-II aminoacyl-tRNA synthetase family. Tetramer of two alpha and two beta subunits.

The protein resides in the cytoplasm. It carries out the reaction tRNA(Gly) + glycine + ATP = glycyl-tRNA(Gly) + AMP + diphosphate. The polypeptide is Glycine--tRNA ligase alpha subunit (Alteromonas mediterranea (strain DSM 17117 / CIP 110805 / LMG 28347 / Deep ecotype)).